Reading from the N-terminus, the 161-residue chain is MPSFDIVSEFDKHEASNAVDQANREIQTRFDFRGVTASFTLEGETVTLEAEVDFQLKQMLDVLRNKLIARGIDARCMDIKEPVTSGVRAHQEVVLKQGLEQPECKDIVKRLKEAKLKVQAQIQGDKVRVTGKKRDELQQAIALLKSDAGPELALQYTNFRD.

It belongs to the YajQ family.

Its function is as follows. Nucleotide-binding protein. In Chromohalobacter salexigens (strain ATCC BAA-138 / DSM 3043 / CIP 106854 / NCIMB 13768 / 1H11), this protein is Nucleotide-binding protein Csal_2524.